We begin with the raw amino-acid sequence, 32 residues long: Acatoxin 1 (32 aa).

Cystine bridges form between C1/C15, C8/C20, and C14/C26.

It is found in the secreted. It localises to the nematocyst. In terms of biological role, reversibly inhibits acid-sensing ion channels (ASIC) in rat dorsal root ganglia neurons. Reversibly inhibits voltage-gated potassium channels (Kv) in rat DRG neurons. In Anthopleura cascaia (Sea anemone), this protein is Acatoxin 1.